Reading from the N-terminus, the 546-residue chain is Thermolysin (546 aa).

The first 25 residues, 1–25, serve as a signal peptide directing secretion; the sequence is MDKRAMLGAIGLAFGLMAWPFGASA. The propeptide at 26-228 is activation peptide; it reads KEKSMVWNEQ…EAKPGGGQPV (203 aa). 4 residues coordinate Ca(2+): aspartate 287, aspartate 289, glutamine 291, and aspartate 368. Residue histidine 372 participates in Zn(2+) binding. Glutamate 373 is a catalytic residue. Positions 376 and 396 each coordinate Zn(2+). Asparagine 413, aspartate 415, glutamate 417, glutamate 420, tyrosine 423, threonine 424, isoleucine 427, and aspartate 430 together coordinate Ca(2+). Catalysis depends on histidine 461, which acts as the Proton donor.

The protein belongs to the peptidase M4 family. Requires Ca(2+) as cofactor. Zn(2+) serves as cofactor.

Its subcellular location is the secreted. It carries out the reaction Preferential cleavage: Xaa-|-Leu &gt; Xaa-|-Phe.. Functionally, extracellular zinc metalloprotease. Has collagenase activity. The sequence is that of Thermolysin (npr) from Bacillus sp. (strain EA1).